Here is a 284-residue protein sequence, read N- to C-terminus: Polyamine aminopropyltransferase (284 aa).

Residues 4–238 form the PABS domain; that stretch reads EVWNTERLHD…GPMALGWGSH (235 aa). S-methyl-5'-thioadenosine is bound at residue glutamine 33. Histidine 64 and aspartate 88 together coordinate spermidine. S-methyl-5'-thioadenosine-binding positions include glutamate 108 and 140–141; that span reads DG. Aspartate 158 acts as the Proton acceptor in catalysis. 158-161 contributes to the spermidine binding site; sequence DSTD. Proline 165 is an S-methyl-5'-thioadenosine binding site.

Belongs to the spermidine/spermine synthase family. As to quaternary structure, homodimer or homotetramer.

Its subcellular location is the cytoplasm. It carries out the reaction S-adenosyl 3-(methylsulfanyl)propylamine + putrescine = S-methyl-5'-thioadenosine + spermidine + H(+). Its pathway is amine and polyamine biosynthesis; spermidine biosynthesis; spermidine from putrescine: step 1/1. Functionally, catalyzes the irreversible transfer of a propylamine group from the amino donor S-adenosylmethioninamine (decarboxy-AdoMet) to putrescine (1,4-diaminobutane) to yield spermidine. The chain is Polyamine aminopropyltransferase from Ruegeria sp. (strain TM1040) (Silicibacter sp.).